The primary structure comprises 101 residues: Movement protein (101 aa).

The helical transmembrane segment at 30–50 (EVAVLSFVALICIYLLYLWVL) threads the bilayer. The interval 78–101 (RSPIPNTLEPTAPVHPGPFVPGSG) is disordered. The segment covering 90-101 (PVHPGPFVPGSG) has biased composition (pro residues).

This sequence belongs to the mastrevirus movement protein family. Interacts with the capsid protein (CP). Part of a MP-CP-viral DNA complex.

Its subcellular location is the host membrane. Involved in the viral transport within, and between cells. In Maize streak virus genotype E (isolate Pat) (MSV), this protein is Movement protein.